Here is a 636-residue protein sequence, read N- to C-terminus: Ubiquitin-activating enzyme E1-like (636 aa).

ATP is bound by residues 28–33, aspartate 52, 60–63, lysine 76, and 121–126; these read GAGGIG, NLNR, and DNLAAR. Zn(2+) contacts are provided by cysteine 162 and cysteine 165. Cysteine 177 acts as the Glycyl thioester intermediate in catalysis. Residues cysteine 435 and cysteine 438 each coordinate Zn(2+). The segment at 581–636 is disordered; the sequence is DGIVILDDDEGEITIDAEPINGSKKRPVDTEISEAPSNKRTKLVNEPTNSDIVELD. The span at 586–595 shows a compositional bias: acidic residues; it reads LDDDEGEITI. Residues 619–622 carry the Nuclear localization signal motif; it reads KRTK. Residues 626–636 show a composition bias toward polar residues; that stretch reads EPTNSDIVELD.

It belongs to the ubiquitin-activating E1 family. In terms of assembly, heterodimer of UBA2 and AOS1. The complex binds SMT3. In terms of processing, multiubiquitinated in vivo.

It is found in the nucleus. It participates in protein modification; protein sumoylation. Functionally, the dimeric enzyme acts as a SMT3 E1 ligase. It mediates ATP-dependent activation of SMT3 and formation of a thioester with a conserved cysteine residue on AOS1. This chain is Ubiquitin-activating enzyme E1-like (UBA2), found in Saccharomyces cerevisiae (strain ATCC 204508 / S288c) (Baker's yeast).